The chain runs to 621 residues: Protein CASP (621 aa).

Topologically, residues 1 to 574 are cytoplasmic; the sequence is MEIVSRAWES…ILATPKSRTV (574 aa). Coiled coils occupy residues 101-445 and 473-525; these read LLKG…VQDI and ILTS…FLQS. A helical; Anchor for type IV membrane protein membrane pass occupies residues 575–595; the sequence is FFSYLLILHALIMLVLYKFAF. Over 596 to 621 the chain is Lumenal; it reads DQSVVRDAETECEYKFHQHMLDNHKQ.

Belongs to the CASP family.

It localises to the golgi apparatus membrane. In terms of biological role, may be involved in intra-Golgi retrograde transport. The polypeptide is Protein CASP (ceh-44) (Caenorhabditis elegans).